Here is a 33-residue protein sequence, read N- to C-terminus: Brevinin-2Eb (33 aa).

A disulfide bond links cysteine 27 and cysteine 33.

It belongs to the frog skin active peptide (FSAP) family. Brevinin subfamily. Expressed by the skin glands.

The protein resides in the secreted. Its function is as follows. Shows antibacterial activity against representative Gram-negative and Gram-positive bacterial species, and hemolytic activity. The chain is Brevinin-2Eb from Pelophylax lessonae (Pool frog).